The sequence spans 260 residues: HTH-type transcriptional repressor NanR (260 aa).

An HTH gntR-type domain is found at 27–95 (KKLSEMVEEE…NGERARISRP (69 aa)). A DNA-binding region (H-T-H motif) is located at residues 55 to 74 (ERELMAFFNVGRPSVREALA).

This sequence belongs to the NanR family.

Functionally, transcriptional repressor that controls expression of the genes required for the catabolism of sialic acids. This is HTH-type transcriptional repressor NanR from Edwardsiella tarda (strain FL6-60).